We begin with the raw amino-acid sequence, 436 residues long: 3-ketoacyl-CoA thiolase (436 aa).

Cysteine 99 acts as the Acyl-thioester intermediate in catalysis. Active-site proton acceptor residues include histidine 392 and cysteine 422.

It belongs to the thiolase-like superfamily. Thiolase family. In terms of assembly, heterotetramer of two alpha chains (FadJ) and two beta chains (FadI).

It is found in the cytoplasm. The enzyme catalyses an acyl-CoA + acetyl-CoA = a 3-oxoacyl-CoA + CoA. It participates in lipid metabolism; fatty acid beta-oxidation. In terms of biological role, catalyzes the final step of fatty acid oxidation in which acetyl-CoA is released and the CoA ester of a fatty acid two carbons shorter is formed. The polypeptide is 3-ketoacyl-CoA thiolase (Salmonella schwarzengrund (strain CVM19633)).